The following is a 725-amino-acid chain: N-alpha-acetyltransferase 35, NatC auxiliary subunit (725 aa).

The disordered stretch occupies residues 548 to 573; it reads ERIMEEQQKGRSSKKTKKKKKVRPLS. The span at 558–571 shows a compositional bias: basic residues; it reads RSSKKTKKKKKVRP.

This sequence belongs to the MAK10 family. In terms of assembly, component of the N-terminal acetyltransferase C (NatC) complex.

It localises to the cytoplasm. Auxillary component of the N-terminal acetyltransferase C (NatC) complex which catalyzes acetylation of N-terminal methionine residues. N-terminal acetylation protects proteins from ubiquitination and degradation by the N-end rule pathway. This is N-alpha-acetyltransferase 35, NatC auxiliary subunit (NAA35) from Gallus gallus (Chicken).